A 485-amino-acid polypeptide reads, in one-letter code: UDP-N-acetylmuramoyl-L-alanyl-D-glutamate--2,6-diaminopimelate ligase (485 aa).

A UDP-N-acetyl-alpha-D-muramoyl-L-alanyl-D-glutamate-binding site is contributed by Ser-30. Residue 111 to 117 participates in ATP binding; the sequence is GTNGKTT. Residues 153-154, Ser-180, Gln-186, and Arg-188 each bind UDP-N-acetyl-alpha-D-muramoyl-L-alanyl-D-glutamate; that span reads TT. Position 220 is an N6-carboxylysine (Lys-220). Meso-2,6-diaminopimelate contacts are provided by residues Arg-378, 402 to 405, Gly-455, and Glu-459; that span reads DNPR. The short motif at 402–405 is the Meso-diaminopimelate recognition motif element; sequence DNPR.

It belongs to the MurCDEF family. MurE subfamily. Mg(2+) is required as a cofactor. In terms of processing, carboxylation is probably crucial for Mg(2+) binding and, consequently, for the gamma-phosphate positioning of ATP.

It is found in the cytoplasm. The catalysed reaction is UDP-N-acetyl-alpha-D-muramoyl-L-alanyl-D-glutamate + meso-2,6-diaminopimelate + ATP = UDP-N-acetyl-alpha-D-muramoyl-L-alanyl-gamma-D-glutamyl-meso-2,6-diaminopimelate + ADP + phosphate + H(+). Its pathway is cell wall biogenesis; peptidoglycan biosynthesis. Functionally, catalyzes the addition of meso-diaminopimelic acid to the nucleotide precursor UDP-N-acetylmuramoyl-L-alanyl-D-glutamate (UMAG) in the biosynthesis of bacterial cell-wall peptidoglycan. This is UDP-N-acetylmuramoyl-L-alanyl-D-glutamate--2,6-diaminopimelate ligase from Bacteroides fragilis (strain ATCC 25285 / DSM 2151 / CCUG 4856 / JCM 11019 / LMG 10263 / NCTC 9343 / Onslow / VPI 2553 / EN-2).